Consider the following 377-residue polypeptide: Nitric oxide reductase FlRd-NAD(+) reductase (377 aa).

Belongs to the FAD-dependent oxidoreductase family. Requires FAD as cofactor.

Its subcellular location is the cytoplasm. It catalyses the reaction 2 reduced [nitric oxide reductase rubredoxin domain] + NAD(+) + H(+) = 2 oxidized [nitric oxide reductase rubredoxin domain] + NADH. Its pathway is nitrogen metabolism; nitric oxide reduction. Functionally, one of at least two accessory proteins for anaerobic nitric oxide (NO) reductase. Reduces the rubredoxin moiety of NO reductase. The sequence is that of Nitric oxide reductase FlRd-NAD(+) reductase from Escherichia coli O139:H28 (strain E24377A / ETEC).